Consider the following 383-residue polypeptide: UDP-D-xylose:L-fucose alpha-1,3-D-xylosyltransferase 3 (383 aa).

Topologically, residues 1 to 20 (MAQQSQRPISNRHISLLNRN) are cytoplasmic. A helical; Signal-anchor for type II membrane protein transmembrane segment spans residues 21–41 (GLILLLLLALFVILGVFLPLT). Topologically, residues 42 to 383 (KSSLFMFPNT…KNRGKKHKLP (342 aa)) are lumenal. N-linked (GlcNAc...) asparagine glycans are attached at residues Asn50, Asn82, and Asn157. The DXD motif motif lies at 180–182 (DVD). Asn212, Asn258, Asn301, Asn306, Asn357, and Asn364 each carry an N-linked (GlcNAc...) asparagine glycan.

Belongs to the glycosyltransferase 77 family. Requires Mn(2+) as cofactor. Mg(2+) is required as a cofactor. In terms of processing, glycosylated. Expressed around trichome support cells in the adaxial epidermis of rosette leaves, in cauline leaves, petals and both the proximal and distal ends of siliques.

The protein resides in the golgi apparatus membrane. In terms of biological role, catalyzes the transfer of D-xylose from UDP-alpha-D-xylose onto L-fucose. Probably involved in the biosynthesis of rhamnogalacturonan II (RG-II) through xylosylation of the internal fucose moiety of the A-chain of RG-II, a structurally complex pectic polysaccharide of the primary cell wall. RG-II is essential for the cell wall integrity of rapidly growing tissues such as roots and pollen tube growth and elongation. This Arabidopsis thaliana (Mouse-ear cress) protein is UDP-D-xylose:L-fucose alpha-1,3-D-xylosyltransferase 3.